The sequence spans 350 residues: 3'-hydroxy-N-methyl-(S)-coclaurine 4'-O-methyltransferase (350 aa).

5 residues coordinate S-adenosyl-L-methionine: Gly-196, Asp-219, Asp-239, Met-240, and Lys-253. The active-site Proton acceptor is His-257.

It belongs to the class I-like SAM-binding methyltransferase superfamily. Cation-independent O-methyltransferase family. COMT subfamily. As to quaternary structure, homodimer.

It carries out the reaction (S)-3'-hydroxy-N-methylcoclaurine + S-adenosyl-L-methionine = (S)-reticuline + S-adenosyl-L-homocysteine + H(+). The protein operates within alkaloid biosynthesis; (S)-reticuline biosynthesis; (S)-reticuline from (S)-norcoclaurine: step 4/4. In terms of biological role, catalyzes the transfer of the methyl group to the 4'-hydroxyl group of 3'-hydroxy-N-methylcoclaurine to form reticuline. This is 3'-hydroxy-N-methyl-(S)-coclaurine 4'-O-methyltransferase from Coptis japonica (Japanese goldthread).